The primary structure comprises 172 residues: Xanthine-guanine phosphoribosyltransferase (172 aa).

5-phospho-alpha-D-ribose 1-diphosphate is bound by residues 47-48 (RG) and 106-114 (DDLVDTGKT). Mg(2+) is bound at residue Asp107. Residues Asp110 and Ile153 each contribute to the guanine site. 2 residues coordinate xanthine: Asp110 and Ile153. Residues 110–114 (DTGKT) and 152–153 (WI) each bind GMP.

The protein belongs to the purine/pyrimidine phosphoribosyltransferase family. XGPT subfamily. As to quaternary structure, homotetramer. It depends on Mg(2+) as a cofactor.

The protein localises to the cell inner membrane. The enzyme catalyses GMP + diphosphate = guanine + 5-phospho-alpha-D-ribose 1-diphosphate. It carries out the reaction XMP + diphosphate = xanthine + 5-phospho-alpha-D-ribose 1-diphosphate. The catalysed reaction is IMP + diphosphate = hypoxanthine + 5-phospho-alpha-D-ribose 1-diphosphate. Its pathway is purine metabolism; GMP biosynthesis via salvage pathway; GMP from guanine: step 1/1. It functions in the pathway purine metabolism; XMP biosynthesis via salvage pathway; XMP from xanthine: step 1/1. Its function is as follows. Purine salvage pathway enzyme that catalyzes the transfer of the ribosyl-5-phosphate group from 5-phospho-alpha-D-ribose 1-diphosphate (PRPP) to the N9 position of the 6-oxopurines guanine and xanthine to form the corresponding ribonucleotides GMP (guanosine 5'-monophosphate) and XMP (xanthosine 5'-monophosphate), with the release of PPi. To a lesser extent, also acts on hypoxanthine. This Rhodopseudomonas palustris (strain HaA2) protein is Xanthine-guanine phosphoribosyltransferase.